Reading from the N-terminus, the 447-residue chain is Secretin receptor (447 aa).

Residues 1-28 (MLSTMSPRLSLLLLWLLLLINAAHPVGA) form the signal peptide. Topologically, residues 29–140 (LPRLCDVRRV…NERRHAYLLK (112 aa)) are extracellular. Cystine bridges form between cysteine 46–cysteine 74, cysteine 65–cysteine 106, and cysteine 88–cysteine 122. N-linked (GlcNAc...) asparagine glycosylation is found at asparagine 71, asparagine 99, asparagine 105, and asparagine 127. Residues 141–166 (LKVMYTVGYSSSLAMLLVALSILCSF) traverse the membrane as a helical segment. Residues 167–173 (RRLHCTR) are Cytoplasmic-facing. Residues 174–194 (NYIHMHLFVSFILRALSNFIK) traverse the membrane as a helical segment. Over 195-215 (DAVLFPADDVTYCDAHRAGCK) the chain is Extracellular. Cysteine 214 and cysteine 284 form a disulfide bridge. A helical transmembrane segment spans residues 216–238 (LVMIFFQYCIMANYAWLLVEGLY). Residues 239–253 (LHTLLAISFFSERKC) lie on the Cytoplasmic side of the membrane. A helical membrane pass occupies residues 254–275 (LQAFVLFGWGSPAIFVALWAVT). Topologically, residues 276 to 290 (RHFLEDFGCWDINSN) are extracellular. N-linked (GlcNAc...) asparagine glycosylation occurs at asparagine 290. Residues 291 to 314 (ASIWWVIRGPVILSIVINFIFFIN) form a helical membrane-spanning segment. Residues 315-339 (ILRILMRKLRTQETRGNETHHYKRL) are Cytoplasmic-facing. A helical membrane pass occupies residues 340–355 (AKSTLLLIPLFGIHYI). Over 356–366 (VFAFSPEGAME) the chain is Extracellular. The chain crosses the membrane as a helical span at residues 367–390 (VQLFFELALGSFQGLVVAVLYCFL). Topologically, residues 391-447 (NGELEVQKKWRQWHLQEFPLRPVALSNSFSNATNGPTHSTKAGTSEQSRSIPGANVI) are cytoplasmic. Over residues 423-440 (TNGPTHSTKAGTSEQSRS) the composition is skewed to polar residues. Residues 423–447 (TNGPTHSTKAGTSEQSRSIPGANVI) are disordered.

Belongs to the G-protein coupled receptor 2 family. Phosphorylated on Ser and Thr residues at the cytoplasmic C-terminus by G protein-coupled receptor kinases (GRKs). In brain, expressed in the hippocampal CA1 region, the lower layer of cerebral cortex, the anterior olfactory nuclei, the anterior ventrolateral thalamus, the lateral region of hypothalamus, substantia nigra, tegmental area and central nucleus of the inferior colliculus, the ventral supramamillary nucleus and the cerebellum. Expressed in brown adipocytes: expression predominates in mature brown adipocytes (at protein level). Detected in the renal medulla, where it localized predominantly on the basolateral membranes of cells in the collecting ducts (blue arrow) and the ascending thick segments of the loop of Henle.

It localises to the cell membrane. The protein resides in the basolateral cell membrane. In terms of biological role, g protein-coupled receptor activated by secretin (SCT), which is involved in different processes such as regulation of the pH of the duodenal content, food intake and water homeostasis. Ligand binding causes a conformation change that triggers signaling via guanine nucleotide-binding proteins (G proteins) and activates cAMP-dependent pathway. Upon binding to secretin, regulates the pH of the duodenum by (1) inhibiting the secretion of gastric acid from the parietal cells of the stomach and (2) stimulating the production of bicarbonate (NaHCO(3)) from the ductal cells of the pancreas. In addition to regulating the pH of the duodenal content, plays a central role in diet induced thermogenesis: acts as a non-sympathetic brown fat (BAT) activator mediating prandial thermogenesis, which consequentially induces satiation. Mechanistically, secretin released by the gut after a meal binds to secretin receptor (SCTR) in brown adipocytes, activating brown fat thermogenesis by stimulating lipolysis, which is sensed in the brain and promotes satiation. Also able to stimulate lipolysis in white adipocytes. Also plays an important role in cellular osmoregulation by regulating renal water reabsorption. Also plays a role in the central nervous system: required for synaptic plasticity. In Mus musculus (Mouse), this protein is Secretin receptor.